The following is a 313-amino-acid chain: uncharacterized protein (313 aa).

A divalent metal cation contacts are provided by H8, H10, E126, H180, H207, and D262.

Belongs to the metallo-dependent hydrolases superfamily. TatD-type hydrolase family. Requires a divalent metal cation as cofactor.

In terms of biological role, putative deoxyribonuclease. This is an uncharacterized protein from Saccharomyces cerevisiae (strain ATCC 204508 / S288c) (Baker's yeast).